Consider the following 743-residue polypeptide: Neutral ceramidase (743 aa).

Residues 1-14 lie on the Cytoplasmic side of the membrane; that stretch reads MASKSRRLSGLEIS. A helical; Signal-anchor for type II membrane protein transmembrane segment spans residues 15 to 35; it reads LIVLFLLMTAVSVALITVLAL. Over 36–743 the chain is Lumenal; sequence KQESDKKEEV…FKVARSFYYF (708 aa). The segment at 40–60 is disordered; that stretch reads DKKEEVTPEEPSPSVTPPEKP. Residues 49 to 59 show a composition bias toward pro residues; it reads EPSPSVTPPEK. Positions 151 and 260 each coordinate Zn(2+). The N-linked (GlcNAc...) asparagine glycan is linked to N265. Residue S312 is the Nucleophile of the active site. Disulfide bonds link C320-C334 and C327-C342. N-linked (GlcNAc...) asparagine glycans are attached at residues N331, N389, N398, and N451. An intrachain disulfide couples C406 to C456. Residues E498 and Y538 each coordinate Zn(2+). A glycan (N-linked (GlcNAc...) asparagine) is linked at N661. Residues D672, S674, and T677 each coordinate Ca(2+). An N-linked (GlcNAc...) asparagine glycan is attached at N720.

The protein belongs to the neutral ceramidase family. Requires Zn(2+) as cofactor. In terms of processing, N-glycosylated. Post-translationally, O-glycosylated. As to expression, detected in intestine (at protein level).

The protein resides in the cell membrane. Its subcellular location is the membrane raft. It is found in the membrane. It localises to the caveola. The protein localises to the golgi apparatus membrane. The protein resides in the mitochondrion. Its subcellular location is the secreted. It is found in the extracellular exosome. It catalyses the reaction an N-acylsphing-4-enine + H2O = sphing-4-enine + a fatty acid. It carries out the reaction N-dodecanoylsphing-4-enine + H2O = dodecanoate + sphing-4-enine. The protein operates within lipid metabolism; sphingolipid metabolism. In terms of biological role, plasma membrane ceramidase that hydrolyzes sphingolipid ceramides into sphingosine and free fatty acids at neutral pH. Ceramides, sphingosine, and its phosphorylated form sphingosine-1-phosphate are bioactive lipids that mediate cellular signaling pathways regulating several biological processes including cell proliferation, apoptosis and differentiation. Also catalyzes the reverse reaction allowing the synthesis of ceramides from fatty acids and sphingosine. Together with sphingomyelinase, participates in the production of sphingosine and sphingosine-1-phosphate from the degradation of sphingomyelin, a sphingolipid enriched in the plasma membrane of cells. Also participates in the hydrolysis of ceramides from the extracellular milieu allowing the production of sphingosine-1-phosphate inside and outside cells. The polypeptide is Neutral ceramidase (asah2) (Danio rerio (Zebrafish)).